We begin with the raw amino-acid sequence, 282 residues long: Probable endonuclease 4 (282 aa).

Zn(2+) is bound by residues histidine 69, histidine 109, glutamate 145, aspartate 179, histidine 182, histidine 216, aspartate 229, histidine 231, and glutamate 261.

This sequence belongs to the AP endonuclease 2 family. The cofactor is Zn(2+).

It carries out the reaction Endonucleolytic cleavage to 5'-phosphooligonucleotide end-products.. Its function is as follows. Endonuclease IV plays a role in DNA repair. It cleaves phosphodiester bonds at apurinic or apyrimidinic (AP) sites, generating a 3'-hydroxyl group and a 5'-terminal sugar phosphate. The protein is Probable endonuclease 4 of Chlorobium chlorochromatii (strain CaD3).